Reading from the N-terminus, the 2167-residue chain is Papilin (2167 aa).

The first 19 residues, 1–19 (MRLLLFSAALLLCSVPTWA), serve as a signal peptide directing secretion. Residues 76–123 (TGNWGPWVPENECSRSCGGGVQLEKRQCSGDCTGASVRYISCNLNACE) enclose the TSP type-1 1 domain. 3 cysteine pairs are disulfide-bonded: C88-C117, C92-C122, and C103-C107. N268 carries an N-linked (GlcNAc...) asparagine glycan. TSP type-1 domains follow at residues 341-402 (VDYM…VDCE), 404-459 (EWFT…TCNR), and 461-525 (ACPE…GPCE). 3 disulfides stabilise this stretch: C353/C396, C357/C401, and C368/C382. N-linked (GlcNAc...) asparagine glycosylation is found at N386 and N445. Residues N541, N568, and N638 are each glycosylated (N-linked (GlcNAc...) asparagine). 2 consecutive TSP type-1 domains span residues 585–643 (CEYE…TNEE) and 645–702 (CTGT…DDCP). N-linked (GlcNAc...) asparagine glycans are attached at residues N715, N729, N741, N814, N820, N857, N933, and N1090. Intrachain disulfides connect C1089–C1141, C1099–C1124, C1116–C1137, C1150–C1202, C1161–C1185, and C1177–C1198. 2 BPTI/Kunitz inhibitor domains span residues 1089-1141 (CNQT…ETIC) and 1150-1202 (CYLP…SMFC). Residues 1239–1273 (QSAEQPQPQQPQQQQQQQQQQPQQPRQSMEDICRS) form a disordered region. The span at 1243 to 1263 (QPQPQQPQQQQQQQQQQPQQP) shows a compositional bias: low complexity. 3 cysteine pairs are disulfide-bonded: C1271/C1321, C1280/C1304, and C1296/C1317. A BPTI/Kunitz inhibitor 3 domain is found at 1271-1321 (CRSRQDAGPCETYSDQWFYNAFSQECETFTYGGCGGNLNRFRSKDECEQRC). The segment at 1332 to 1365 (ARQEQAQPAAQPAQPAQPSNIVSPPQQSASPVVV) is disordered. 9 disulfides stabilise this stretch: C1375-C1425, C1384-C1408, C1400-C1421, C1447-C1497, C1456-C1480, C1472-C1493, C1504-C1554, C1513-C1537, and C1529-C1550. 3 BPTI/Kunitz inhibitor domains span residues 1375–1425 (CHLN…ESLC), 1447–1497 (CDEA…KAAC), and 1504–1554 (CQLP…QARC). The interval 1556–1615 (KDDQTTTTSQPEELPSLPLVQEDPQPRPAFSLKQSFAHSRRRDAPFARSVSARHHTPDSE) is disordered. Disulfide bonds link C1621–C1671, C1630–C1654, C1646–C1667, C1731–C1781, C1740–C1764, C1756–C1777, C1790–C1840, C1799–C1823, and C1815–C1836. BPTI/Kunitz inhibitor domains follow at residues 1621-1671 (CYAV…ETSC), 1731-1781 (CMLP…ERAC), and 1790-1840 (CELP…ESLC). The N-linked (GlcNAc...) asparagine glycan is linked to N1848. 6 disulfide bridges follow: C1853–C1903, C1862–C1886, C1878–C1899, C1914–C1964, C1923–C1947, and C1939–C1960. 2 BPTI/Kunitz inhibitor domains span residues 1853–1903 (CTLE…QQSC) and 1914–1964 (CTLR…FRRC). 3 N-linked (GlcNAc...) asparagine glycosylation sites follow: N1992, N2087, and N2133. The disordered stretch occupies residues 2075–2106 (RTTSRPMLTPSKNFSLGTPPTPSPSTVSTTPF). The span at 2078 to 2090 (SRPMLTPSKNFSL) shows a compositional bias: polar residues. The region spanning 2124 to 2163 (TSNSCMDVGNASTCDLIVKNGLCGKKRYGTFCCHTCTRVH) is the PLAC domain.

This sequence belongs to the papilin family. As to expression, localizes to the basement membranes of the gonad primordium, pharynx and intestine (at protein level). Expressed in head and CAN neurons, coelomocytes, body-wall muscles and anal depressor and sphincter and stomatointestinal muscles. Expressed Isoform a: is expressed in body wall muscles and distal cell tips. Isoform b: expressed in embryonic muscles.

Its subcellular location is the secreted. The protein localises to the extracellular space. The protein resides in the extracellular matrix. It is found in the basement membrane. Functionally, involved in pharynx morphogenesis probably by remodeling the basement membrane. Its function is as follows. Plays a role in embryogenesis, the second phase of distal cell tip migration and is required for distribution of the metalloproteinase, mig-17, during organogenesis. In terms of biological role, plays a role in post embryonic distal cell tip migration. Essential extracellular matrix (ECM) protein required for hypodermal enclosure in the embryo. This Caenorhabditis elegans protein is Papilin (mig-6).